The following is a 272-amino-acid chain: 3-methyl-2-oxobutanoate hydroxymethyltransferase (272 aa).

2 residues coordinate Mg(2+): D52 and D91. Residues 52 to 53, D91, and K121 contribute to the 3-methyl-2-oxobutanoate site; that span reads DS. Position 123 (E123) interacts with Mg(2+). E190 serves as the catalytic Proton acceptor.

The protein belongs to the PanB family. In terms of assembly, homodecamer; pentamer of dimers. It depends on Mg(2+) as a cofactor.

It localises to the cytoplasm. The catalysed reaction is 3-methyl-2-oxobutanoate + (6R)-5,10-methylene-5,6,7,8-tetrahydrofolate + H2O = 2-dehydropantoate + (6S)-5,6,7,8-tetrahydrofolate. It functions in the pathway cofactor biosynthesis; (R)-pantothenate biosynthesis; (R)-pantoate from 3-methyl-2-oxobutanoate: step 1/2. Its function is as follows. Catalyzes the reversible reaction in which hydroxymethyl group from 5,10-methylenetetrahydrofolate is transferred onto alpha-ketoisovalerate to form ketopantoate. The protein is 3-methyl-2-oxobutanoate hydroxymethyltransferase of Christiangramia forsetii (strain DSM 17595 / CGMCC 1.15422 / KT0803) (Gramella forsetii).